Reading from the N-terminus, the 348-residue chain is 11-beta-hydroxysteroid dehydrogenase A (348 aa).

The helical; Signal-anchor for type II membrane protein transmembrane segment at 10–30 (LIAPPFTFFFLLFFLPPFQIF) threads the bilayer. A Proline-knob motif is present at residues 13-26 (PPFTFFFLLFFLPP). NADP(+)-binding positions include 54 to 80 (GASSGIGESLAYEYAKRGACLVLAARR), Asp-105, and 132 to 135 (NAGI). Residue Ser-184 participates in substrate binding. The active-site Proton acceptor is Tyr-197. NADP(+)-binding positions include 197–201 (YNASK) and Lys-201.

This sequence belongs to the short-chain dehydrogenases/reductases (SDR) family. Expressed in seeds (at protein level). Not expressed in stem, leaf or root (at protein level).

Its subcellular location is the lipid droplet. The protein localises to the membrane. It catalyses the reaction an 11beta-hydroxysteroid + NADP(+) = an 11-oxosteroid + NADPH + H(+). The enzyme catalyses an 11beta-hydroxysteroid + NAD(+) = an 11-oxosteroid + NADH + H(+). It carries out the reaction corticosterone + NADP(+) = 11-dehydrocorticosterone + NADPH + H(+). The catalysed reaction is corticosterone + NAD(+) = 11-dehydrocorticosterone + NADH + H(+). It catalyses the reaction 17beta-estradiol + NADP(+) = estrone + NADPH + H(+). The enzyme catalyses 17beta-estradiol + NAD(+) = estrone + NADH + H(+). In terms of biological role, has dehydrogenase activity against corticosterone (11 beta-hydroxysteroid) and estradiol (17 beta-hydroxysteroid), with higher activity against estradiol. Possesses higher dehydrogenase activity with NADP(+) than NAD(+) regardless of the sterol substrate. May be involved in signal transduction regulated by various sterols. The sequence is that of 11-beta-hydroxysteroid dehydrogenase A from Sesamum indicum (Oriental sesame).